Here is a 198-residue protein sequence, read N- to C-terminus: Nucleoside triphosphate pyrophosphatase (198 aa).

Catalysis depends on Asp72, which acts as the Proton acceptor.

It belongs to the Maf family. A divalent metal cation is required as a cofactor.

Its subcellular location is the cytoplasm. It carries out the reaction a ribonucleoside 5'-triphosphate + H2O = a ribonucleoside 5'-phosphate + diphosphate + H(+). The catalysed reaction is a 2'-deoxyribonucleoside 5'-triphosphate + H2O = a 2'-deoxyribonucleoside 5'-phosphate + diphosphate + H(+). Its function is as follows. Nucleoside triphosphate pyrophosphatase. May have a dual role in cell division arrest and in preventing the incorporation of modified nucleotides into cellular nucleic acids. The polypeptide is Nucleoside triphosphate pyrophosphatase (Corynebacterium aurimucosum (strain ATCC 700975 / DSM 44827 / CIP 107346 / CN-1) (Corynebacterium nigricans)).